The following is a 237-amino-acid chain: Adenosine 5'-phosphosulfate reductase (237 aa).

Positions 123, 124, 206, and 209 each coordinate [4Fe-4S] cluster. C232 serves as the catalytic Nucleophile; cysteine thiosulfonate intermediate.

Belongs to the PAPS reductase family. CysH subfamily. [4Fe-4S] cluster is required as a cofactor.

The protein resides in the cytoplasm. It catalyses the reaction [thioredoxin]-disulfide + sulfite + AMP + 2 H(+) = adenosine 5'-phosphosulfate + [thioredoxin]-dithiol. Its pathway is sulfur metabolism; hydrogen sulfide biosynthesis; sulfite from sulfate. In terms of biological role, catalyzes the formation of sulfite from adenosine 5'-phosphosulfate (APS) using thioredoxin as an electron donor. This Mycobacteroides abscessus (strain ATCC 19977 / DSM 44196 / CCUG 20993 / CIP 104536 / JCM 13569 / NCTC 13031 / TMC 1543 / L948) (Mycobacterium abscessus) protein is Adenosine 5'-phosphosulfate reductase.